Consider the following 426-residue polypeptide: UPF0761 membrane protein Nmul_A0452 (426 aa).

Transmembrane regions (helical) follow at residues 48 to 68 (LLSLVPMLAIGLSVIAAFPAF), 106 to 126 (LTAIGIAFLGVTALALMLTID), 145 to 165 (LLIYWSVLTIGPLLIGASLSL), 187 to 207 (LLRLSPLVLTSIAFSASYLIV), 217 to 237 (AIAGGVAAAIGFEIMKEGFAF), and 255 to 275 (IPIFLLWLYLSWLMVLLGAVI).

The protein belongs to the UPF0761 family.

It is found in the cell inner membrane. This chain is UPF0761 membrane protein Nmul_A0452, found in Nitrosospira multiformis (strain ATCC 25196 / NCIMB 11849 / C 71).